Consider the following 71-residue polypeptide: Cold shock-like protein CspB (71 aa).

The 61-residue stretch at 7-67 (GLVKWFNADK…GAKGPAAANV (61 aa)) folds into the CSD domain.

It localises to the cytoplasm. The polypeptide is Cold shock-like protein CspB (cspB) (Escherichia coli (strain K12)).